The following is a 557-amino-acid chain: Prosaposin (557 aa).

The first 16 residues, 1 to 16, serve as a signal peptide directing secretion; sequence MYALALFASLLATALT. Positions 17–59 are excised as a propeptide; that stretch reads SPVQDPKTCSGGSAVLCRDVKTAVDCGAVKHCQQMVWSKPTAK. The Saposin A-type 1 domain maps to 18–58; it reads PVQDPKTCSGGSAVLCRDVKTAVDCGAVKHCQQMVWSKPTA. 4 consecutive Saposin B-type domains span residues 59–142, 193–277, 313–394, and 438–519; these read KSLP…QSLQ, NEDV…NEVK, NVIL…AARP, and NGGF…PSAY. Cystine bridges form between C63-C138, C66-C132, and C94-C106. N80 carries N-linked (GlcNAc...) asparagine glycosylation. The propeptide occupies 143-193; sequence EYLAEQNQKQLESNKIPEVDMARVVAPFMSNIPLLLYPQDHPRSQPQPKAN. 3 cysteine pairs are disulfide-bonded: C197–C273, C200–C267, and C229–C240. N214 carries an N-linked (GlcNAc...) asparagine glycan. Positions 277-312 are excised as a propeptide; sequence KRVPMKTLVPATETIKNILPALEMMDPYEQNLVQAH. 3 cysteine pairs are disulfide-bonded: C317-C390, C320-C384, and C348-C359. N334 carries N-linked (GlcNAc...) asparagine glycosylation. Residues 393-437 constitute a propeptide that is removed on maturation; the sequence is RPELVEALEQPAPAIVSALLKEPTPPKQPAQPKQSALPAHVPPQK. 3 disulfide bridges follow: C442-C515, C445-C509, and C473-C484. Residue N459 is glycosylated (N-linked (GlcNAc...) asparagine). Residues 520–557 constitute a propeptide that is removed on maturation; sequence KLLLGTEKCVWGPSYWCQNMETAARCNAVDHCKRHVWN. One can recognise a Saposin A-type 2 domain in the interval 521-557; it reads LLLGTEKCVWGPSYWCQNMETAARCNAVDHCKRHVWN.

In terms of assembly, saposin-B is a homodimer. Prosaposin exists as a roughly half-half mixture of monomers and disulfide-linked dimers. Monomeric prosaposin interacts (via C-terminus) with sortilin/SORT1, the interaction is required for targeting to lysosomes. Interacts with GRN; facilitates lysosomal delivery of progranulin from the extracellular space and the biosynthetic pathway.

Its subcellular location is the secreted. The protein resides in the lysosome. In terms of biological role, behaves as a myelinotrophic and neurotrophic factor, these effects are mediated by its G-protein-coupled receptors, GPR37 and GPR37L1, undergoing ligand-mediated internalization followed by ERK phosphorylation signaling. Saposin-A and saposin-C stimulate the hydrolysis of glucosylceramide by beta-glucosylceramidase (EC 3.2.1.45) and galactosylceramide by beta-galactosylceramidase (EC 3.2.1.46). Saposin-C apparently acts by combining with the enzyme and acidic lipid to form an activated complex, rather than by solubilizing the substrate. Functionally, saposin-B stimulates the hydrolysis of galacto-cerebroside sulfate by arylsulfatase A (EC 3.1.6.8), GM1 gangliosides by beta-galactosidase (EC 3.2.1.23) and globotriaosylceramide by alpha-galactosidase A (EC 3.2.1.22). Saposin-B forms a solubilizing complex with the substrates of the sphingolipid hydrolases. Its function is as follows. Saposin-D is a specific sphingomyelin phosphodiesterase activator (EC 3.1.4.12). In terms of biological role, saposins are specific low-molecular mass non-enzymatic proteins, they participate in the lysosomal degradation of sphingolipids, which takes place by the sequential action of specific hydrolases. This Mus musculus (Mouse) protein is Prosaposin (Psap).